The sequence spans 186 residues: Crossover junction endodeoxyribonuclease RuvC (186 aa).

Residues Asp-7, Glu-73, and Asp-145 contribute to the active site. 3 residues coordinate Mg(2+): Asp-7, Glu-73, and Asp-145.

Belongs to the RuvC family. Homodimer which binds Holliday junction (HJ) DNA. The HJ becomes 2-fold symmetrical on binding to RuvC with unstacked arms; it has a different conformation from HJ DNA in complex with RuvA. In the full resolvosome a probable DNA-RuvA(4)-RuvB(12)-RuvC(2) complex forms which resolves the HJ. The cofactor is Mg(2+).

The protein localises to the cytoplasm. The enzyme catalyses Endonucleolytic cleavage at a junction such as a reciprocal single-stranded crossover between two homologous DNA duplexes (Holliday junction).. The RuvA-RuvB-RuvC complex processes Holliday junction (HJ) DNA during genetic recombination and DNA repair. Endonuclease that resolves HJ intermediates. Cleaves cruciform DNA by making single-stranded nicks across the HJ at symmetrical positions within the homologous arms, yielding a 5'-phosphate and a 3'-hydroxyl group; requires a central core of homology in the junction. The consensus cleavage sequence is 5'-(A/T)TT(C/G)-3'. Cleavage occurs on the 3'-side of the TT dinucleotide at the point of strand exchange. HJ branch migration catalyzed by RuvA-RuvB allows RuvC to scan DNA until it finds its consensus sequence, where it cleaves and resolves the cruciform DNA. The protein is Crossover junction endodeoxyribonuclease RuvC of Acidovorax sp. (strain JS42).